A 289-amino-acid polypeptide reads, in one-letter code: Serine/threonine-protein phosphatase Pgam5, mitochondrial (289 aa).

Residues phenylalanine 7–leucine 23 traverse the membrane as a helical segment.

This sequence belongs to the phosphoglycerate mutase family. BPG-dependent PGAM subfamily. Interacts with Pk92B/ASK1.

Its subcellular location is the mitochondrion outer membrane. It catalyses the reaction O-phospho-L-seryl-[protein] + H2O = L-seryl-[protein] + phosphate. It carries out the reaction O-phospho-L-threonyl-[protein] + H2O = L-threonyl-[protein] + phosphate. Its function is as follows. Displays phosphatase activity for serine/threonine residues, and dephosphorylates and activates Pk92B kinase. Has apparently no phosphoglycerate mutase activity. The polypeptide is Serine/threonine-protein phosphatase Pgam5, mitochondrial (Drosophila simulans (Fruit fly)).